Reading from the N-terminus, the 509-residue chain is Cytochrome P450 monooxygenase LUC2 (509 aa).

Residues 30–50 (TKVLVTFLTIVIIAPRVFTVI) traverse the membrane as a helical segment. Heme is bound at residue Cys-456.

It belongs to the cytochrome P450 family. Requires heme as cofactor.

Its subcellular location is the membrane. Its pathway is mycotoxin biosynthesis. Cytochrome P450 monooxygenase; part of the gene cluster that mediates the biosynthesis of the mycotoxin lucilactaene and the lucilactaene-related compound NG-391 that act as cell cycle inhibitors with potent growth inhibitory activity against malarial parasites, moderate growth inhibitory activity against cancer cells, and no activity against bacteria and fungi. Within the pathway, LUC2 performs C-20 methyl group hydroxylation of several intermediates. LUC2 does not perform the full oxidation of the C-20 methyl group into carboxylic acid, which is a prerequisite for the final methylation step. The pathway begins with the hybrid PKS-NRPS synthetase LUC5 which is responsible for the condensation of one acetyl-coenzyme A (CoA) unit with six malonyl-CoA units and the amide linkage of the arising heptaketide and homoserine, subsequently releasing the first intermediate prelucilactaene B. Both the cytochrome P450 monooxygenase LUC2 and the hydrolase LUC6 function in parallel in modification of prelucilactaene B. LUC6 may catalyze the 2-pyrrolidone ring formation to form prelucilactaene C from prelucilactaene B, followed by C-15 hydroxylation by the same enzyme to give prelucilactaene D, which is then converted to prelucilactaene E by epoxidation, and finally to prelucilactaene F by cyclization. Prelucilactane D, prelucilactaene E, and prelucilactaene F can be converted to dihydrolucilactaene, NG391, and lucilactaene, respectively, via C-20 methyl group hydroxylation by the cytochrome P450 monooxygenase LUC2. However, LUC2, unlike FUS8 in fusarin C biosynthesis, is not enough for the full oxidation of the C-20 methyl group into carboxylic acid, which is a prerequisite for the final methylation step. The aldehyde dehydrogenase LUC3 is involved in the biosynthesis by further oxidation of the C-20 alcoholic analog prelucilactaene G into a carboxylic derivative. This unidentified carboxylic derivative may be converted to demethyllucilactaene. As the last step, the methyltransferase LUC1 methylates the hydroxyl group at C-21 of demethyllucilactaene to generate lucilactaene. In Fusarium sp, this protein is Cytochrome P450 monooxygenase LUC2.